Consider the following 161-residue polypeptide: 2-C-methyl-D-erythritol 2,4-cyclodiphosphate synthase (161 aa).

Positions 8 and 10 each coordinate a divalent metal cation. Residues 8 to 10 (DLH) and 34 to 35 (HS) contribute to the 4-CDP-2-C-methyl-D-erythritol 2-phosphate site. Histidine 42 serves as a coordination point for a divalent metal cation. 4-CDP-2-C-methyl-D-erythritol 2-phosphate-binding positions include 56-58 (DIG) and arginine 142.

This sequence belongs to the IspF family. As to quaternary structure, homotrimer. It depends on a divalent metal cation as a cofactor.

The enzyme catalyses 4-CDP-2-C-methyl-D-erythritol 2-phosphate = 2-C-methyl-D-erythritol 2,4-cyclic diphosphate + CMP. It participates in isoprenoid biosynthesis; isopentenyl diphosphate biosynthesis via DXP pathway; isopentenyl diphosphate from 1-deoxy-D-xylulose 5-phosphate: step 4/6. Involved in the biosynthesis of isopentenyl diphosphate (IPP) and dimethylallyl diphosphate (DMAPP), two major building blocks of isoprenoid compounds. Catalyzes the conversion of 4-diphosphocytidyl-2-C-methyl-D-erythritol 2-phosphate (CDP-ME2P) to 2-C-methyl-D-erythritol 2,4-cyclodiphosphate (ME-CPP) with a corresponding release of cytidine 5-monophosphate (CMP). In Treponema denticola (strain ATCC 35405 / DSM 14222 / CIP 103919 / JCM 8153 / KCTC 15104), this protein is 2-C-methyl-D-erythritol 2,4-cyclodiphosphate synthase.